A 712-amino-acid chain; its full sequence is Prion-like (glutamine/asparagine-rich) domain bearing protein pqn-59 (712 aa).

Composition is skewed to basic and acidic residues over residues 79–92 (EQKG…KPEE) and 125–141 (RESR…KEGA). Disordered stretches follow at residues 79–172 (EQKG…RAVA), 198–217 (TEVQ…TSSA), 228–265 (AAAH…SVAP), 410–517 (SRIM…QQHP), 594–624 (FNKF…ATNY), and 659–712 (AGGR…NWSN). The segment covering 156 to 165 (GRGGRGGARG) has biased composition (gly residues). Low complexity predominate over residues 241–255 (AQNPQPAAPPRRSLS). Polar residues predominate over residues 431–458 (LKSTSPPLSYGQSNRGLSYDTSSASYQP). Low complexity predominate over residues 474–510 (PTQQSAQQHQPQQQQQQAPQQPVQQQQQTPPAQSQPT). Polar residues-rich tracts occupy residues 597–612 (FGSQ…QASN) and 683–696 (AAQQ…QHNG).

This sequence belongs to the Ubiquitin-associated-like family.

Its subcellular location is the cytoplasm. It is found in the stress granule. In terms of biological role, antagonises the activities of multiple heterochronic microRNAs such as lin-4 and let-7 miRNAs. Modulates gene expression and cell fate specification during development. Plays a role in, but not strictly required for, the formation of stress granules. May be involved in protein translation and reducing the expression of mature microRNAs. The chain is Prion-like (glutamine/asparagine-rich) domain bearing protein pqn-59 from Caenorhabditis elegans.